A 129-amino-acid polypeptide reads, in one-letter code: Small ribosomal subunit protein uS11 (129 aa).

The protein belongs to the universal ribosomal protein uS11 family. As to quaternary structure, part of the 30S ribosomal subunit. Interacts with proteins S7 and S18. Binds to IF-3.

Its function is as follows. Located on the platform of the 30S subunit, it bridges several disparate RNA helices of the 16S rRNA. Forms part of the Shine-Dalgarno cleft in the 70S ribosome. The chain is Small ribosomal subunit protein uS11 from Salmonella newport (strain SL254).